A 505-amino-acid chain; its full sequence is 2,3-bisphosphoglycerate-independent phosphoglycerate mutase (505 aa).

2 residues coordinate Mn(2+): D11 and S61. Catalysis depends on S61, which acts as the Phosphoserine intermediate. Residues H122, 152–153, R184, R190, 258–261, and K331 contribute to the substrate site; these read RD and RPDR. Residues D396, H400, D437, H438, and H455 each coordinate Mn(2+).

It belongs to the BPG-independent phosphoglycerate mutase family. In terms of assembly, monomer. It depends on Mn(2+) as a cofactor.

The catalysed reaction is (2R)-2-phosphoglycerate = (2R)-3-phosphoglycerate. It functions in the pathway carbohydrate degradation; glycolysis; pyruvate from D-glyceraldehyde 3-phosphate: step 3/5. Its function is as follows. Catalyzes the interconversion of 2-phosphoglycerate and 3-phosphoglycerate. The chain is 2,3-bisphosphoglycerate-independent phosphoglycerate mutase from Mesomycoplasma hyopneumoniae (strain 7448) (Mycoplasma hyopneumoniae).